The chain runs to 235 residues: Zein-alpha PMS1 (235 aa).

An N-terminal signal peptide occupies residues 1–21 (MAAKIFCLLMLLGLSASAATA).

Belongs to the zein family.

Its function is as follows. Zeins are major seed storage proteins. In Zea mays (Maize), this protein is Zein-alpha PMS1 (ZMPMS1).